The chain runs to 198 residues: Guanylate kinase (198 aa).

Gly-2 is subject to N-acetylglycine. In terms of domain architecture, Guanylate kinase-like spans 4–186 (PRPVVLSGPS…AYWALKEALS (183 aa)). 14–19 (GAGKST) contributes to the ATP binding site. 37–51 (SHTTRDPRPGEENGK) contacts substrate. Catalysis depends on residues Arg-44, Arg-137, and Arg-148. Position 171 to 172 (171 to 172 (ND)) interacts with ATP.

This sequence belongs to the guanylate kinase family. As to quaternary structure, monomer. Interacts with RD3.

The protein localises to the photoreceptor inner segment. The protein resides in the cytoplasm. It localises to the cytosol. It catalyses the reaction GMP + ATP = GDP + ADP. Its activity is regulated as follows. Up-regulated by RD3. In terms of biological role, catalyzes the phosphorylation of GMP to GDP. Essential enzyme for recycling GMP and indirectly, cyclic GMP (cGMP). Involved in the cGMP metabolism in photoreceptors. This is Guanylate kinase (GUK1) from Sus scrofa (Pig).